A 111-amino-acid chain; its full sequence is Large ribosomal subunit protein uL22 (111 aa).

Belongs to the universal ribosomal protein uL22 family. As to quaternary structure, part of the 50S ribosomal subunit.

This protein binds specifically to 23S rRNA; its binding is stimulated by other ribosomal proteins, e.g. L4, L17, and L20. It is important during the early stages of 50S assembly. It makes multiple contacts with different domains of the 23S rRNA in the assembled 50S subunit and ribosome. In terms of biological role, the globular domain of the protein is located near the polypeptide exit tunnel on the outside of the subunit, while an extended beta-hairpin is found that lines the wall of the exit tunnel in the center of the 70S ribosome. This Geobacter sulfurreducens (strain ATCC 51573 / DSM 12127 / PCA) protein is Large ribosomal subunit protein uL22.